The chain runs to 186 residues: Ribosome-recycling factor (186 aa).

This sequence belongs to the RRF family.

It is found in the cytoplasm. Responsible for the release of ribosomes from messenger RNA at the termination of protein biosynthesis. May increase the efficiency of translation by recycling ribosomes from one round of translation to another. The chain is Ribosome-recycling factor from Rickettsia akari (strain Hartford).